Here is an 89-residue protein sequence, read N- to C-terminus: MAHHKSAKKRILQTAKRTERNRYYRTRIKNITKAVHEAVEAADMTAAQEAFKVANKQIHSLVSKGFIKKATAARKVSRLHKMVNKIEAA.

Belongs to the bacterial ribosomal protein bS20 family.

Functionally, binds directly to 16S ribosomal RNA. The protein is Small ribosomal subunit protein bS20 of Sulfurovum sp. (strain NBC37-1).